The following is a 443-amino-acid chain: Threonine/serine transporter TdcC (443 aa).

11 helical membrane passes run 22 to 42, 44 to 64, 97 to 117, 140 to 160, 163 to 183, 207 to 227, 259 to 279, 319 to 339, 366 to 386, 389 to 409, and 423 to 443; these read TTWTLGLFGTAIGAGVLFFPI, AGFGGLIPILLMLVLAYPIAF, GVVITFLYFFAICPLLWIYGV, VVALFLLLLMAFVIWFGKDLM, VMSYLVWPFIASLVLISLSLI, ILVTVWLGISIMVFSFNFSPI, ASMLMVAVVMFFAFSCLFTLS, ASIIALVAIFKSFFGHYLGTL, ISMIFIMGSTWIVAYANPNIL, IEAMGAPIIASLLCLLPMYAI, and DNVFVTLIGLLTILNIVYKLF.

The protein belongs to the amino acid/polyamine transporter 2 family. SdaC/TdcC subfamily.

It is found in the cell inner membrane. It carries out the reaction L-threonine(in) + H(+)(in) = L-threonine(out) + H(+)(out). The enzyme catalyses L-serine(in) + H(+)(in) = L-serine(out) + H(+)(out). Involved in the import of threonine and serine into the cell, with the concomitant import of a proton (symport system). The polypeptide is Threonine/serine transporter TdcC (Salmonella arizonae (strain ATCC BAA-731 / CDC346-86 / RSK2980)).